Here is a 369-residue protein sequence, read N- to C-terminus: 4beta-methylsterol monooxygenase (369 aa).

The Rieske domain occupies 29–135 (WYVVEIDGRL…VKAQWGLIWL (107 aa)). 4 residues coordinate [2Fe-2S] cluster: Cys70, His72, Cys89, and His92.

It depends on [2Fe-2S] cluster as a cofactor.

It catalyses the reaction a 3beta-hydroxy-4,4-dimethylsteroid + 3 NADH + 3 O2 + 2 H(+) = a 3beta-hydroxy-4alpha-methylsteroid-4beta-carboxylate + 3 NAD(+) + 4 H2O. It carries out the reaction 4,4-dimethyl-5alpha-cholesta-8,24-dien-3beta-ol + 3 NADH + 3 O2 + 2 H(+) = 4beta-carboxy-4alpha-methyl-5alpha-cholesta-8,24-dien-3beta-ol + 3 NAD(+) + 4 H2O. The enzyme catalyses a 3beta-hydroxy-4,4-dimethylsteroid + NADH + O2 + H(+) = a 3beta-hydroxy-4beta-hydroxymethyl-4alpha-methylsteroid + NAD(+) + H2O. The catalysed reaction is a 3beta-hydroxy-4beta-hydroxymethyl-4alpha-methylsteroid + NADH + O2 + H(+) = a 3beta-hydroxy-4beta-formyl-4alpha-methylsteroid + NAD(+) + 2 H2O. It catalyses the reaction a 3beta-hydroxy-4beta-formyl-4alpha-methylsteroid + NADH + O2 = a 3beta-hydroxy-4alpha-methylsteroid-4beta-carboxylate + NAD(+) + H2O. It carries out the reaction 4,4-dimethyl-5alpha-cholesta-8,24-dien-3beta-ol + NADH + O2 + H(+) = 4beta-hydroxymethyl-4alpha-methylzymosterol + NAD(+) + H2O. The enzyme catalyses 4beta-hydroxymethyl-4alpha-methylzymosterol + NADH + O2 + H(+) = 4beta-formylmethyl-4alpha-methyl-5alpha-cholesta-8,24-dien-3beta-ol + NAD(+) + 2 H2O. The catalysed reaction is 4beta-formylmethyl-4alpha-methyl-5alpha-cholesta-8,24-dien-3beta-ol + NADH + O2 = 4beta-carboxy-4alpha-methyl-5alpha-cholesta-8,24-dien-3beta-ol + NAD(+) + H2O. The protein operates within steroid biosynthesis; sterol biosynthesis. Its function is as follows. Participates in the biosynthesis of bacterial sterols. Together with SdmB, removes one methyl group from the C-4 position of 4,4-dimethylated steroid molecules. SdmA oxidizes the sterol 4beta-methyl group into first a hydroxyl, then an aldehyde and finally a carboxylic acid group. The polypeptide is 4beta-methylsterol monooxygenase (Methylococcus capsulatus (strain ATCC 33009 / NCIMB 11132 / Bath)).